The primary structure comprises 184 residues: Luciferin-binding protein (184 aa).

EF-hand domains are found at residues 10-45 (YHLRKMKTRMKRVDVTGDGFISREDYELIAVRIAKI), 46-81 (AKLSAEKAEETRQEFLRVADQLGLAPGVRISVEEAA), 98-133 (MAVIQSLIMYDCIDTDKDGYVSLPEFKAFLQAVGPD), and 134-169 (ITDDKAITCFNTLDFNKNGQISRDEFLVTVNDFLFG). Asp111, Asp113, Asp115, Tyr117, Glu122, Asp147, Asn149, Asn151, Gln153, and Glu158 together coordinate Ca(2+).

In terms of biological role, this Ca(2+)-dependent protein binds to luciferin. The luciferin of LBP is capable of reacting with luciferase and O(2) only when calcium is bound. In Renilla reniformis (Sea pansy), this protein is Luciferin-binding protein.